A 161-amino-acid polypeptide reads, in one-letter code: Crossover junction endodeoxyribonuclease RuvC (161 aa).

Active-site residues include Asp-8, Glu-67, and Asp-139. Mg(2+) contacts are provided by Asp-8, Glu-67, and Asp-139.

This sequence belongs to the RuvC family. As to quaternary structure, homodimer which binds Holliday junction (HJ) DNA. The HJ becomes 2-fold symmetrical on binding to RuvC with unstacked arms; it has a different conformation from HJ DNA in complex with RuvA. In the full resolvosome a probable DNA-RuvA(4)-RuvB(12)-RuvC(2) complex forms which resolves the HJ. It depends on Mg(2+) as a cofactor.

It is found in the cytoplasm. The catalysed reaction is Endonucleolytic cleavage at a junction such as a reciprocal single-stranded crossover between two homologous DNA duplexes (Holliday junction).. The RuvA-RuvB-RuvC complex processes Holliday junction (HJ) DNA during genetic recombination and DNA repair. Endonuclease that resolves HJ intermediates. Cleaves cruciform DNA by making single-stranded nicks across the HJ at symmetrical positions within the homologous arms, yielding a 5'-phosphate and a 3'-hydroxyl group; requires a central core of homology in the junction. The consensus cleavage sequence is 5'-(A/T)TT(C/G)-3'. Cleavage occurs on the 3'-side of the TT dinucleotide at the point of strand exchange. HJ branch migration catalyzed by RuvA-RuvB allows RuvC to scan DNA until it finds its consensus sequence, where it cleaves and resolves the cruciform DNA. The polypeptide is Crossover junction endodeoxyribonuclease RuvC (Wigglesworthia glossinidia brevipalpis).